The chain runs to 552 residues: Chaperonin GroEL (552 aa).

ATP-binding positions include 30–33, Lys-51, 87–91, Gly-415, and Asp-496; these read TLGP and DGTTT.

Belongs to the chaperonin (HSP60) family. In terms of assembly, forms a cylinder of 14 subunits composed of two heptameric rings stacked back-to-back. Interacts with the co-chaperonin GroES.

The protein resides in the cytoplasm. It catalyses the reaction ATP + H2O + a folded polypeptide = ADP + phosphate + an unfolded polypeptide.. Functionally, together with its co-chaperonin GroES, plays an essential role in assisting protein folding. The GroEL-GroES system forms a nano-cage that allows encapsulation of the non-native substrate proteins and provides a physical environment optimized to promote and accelerate protein folding. The chain is Chaperonin GroEL from Paramagnetospirillum magneticum (strain ATCC 700264 / AMB-1) (Magnetospirillum magneticum).